The sequence spans 227 residues: Ribose-5-phosphate isomerase A (227 aa).

Residues 26 to 29, 82 to 85, and 95 to 98 each bind substrate; these read TGST, DGAD, and KGGG. Glu104 (proton acceptor) is an active-site residue. Residue Lys122 participates in substrate binding.

This sequence belongs to the ribose 5-phosphate isomerase family. In terms of assembly, homodimer.

The catalysed reaction is aldehydo-D-ribose 5-phosphate = D-ribulose 5-phosphate. It functions in the pathway carbohydrate degradation; pentose phosphate pathway; D-ribose 5-phosphate from D-ribulose 5-phosphate (non-oxidative stage): step 1/1. Its function is as follows. Catalyzes the reversible conversion of ribose-5-phosphate to ribulose 5-phosphate. The chain is Ribose-5-phosphate isomerase A from Streptococcus pneumoniae serotype 2 (strain D39 / NCTC 7466).